A 759-amino-acid polypeptide reads, in one-letter code: Phosphoribosylformylglycinamidine synthase subunit PurL (759 aa).

His46 is a catalytic residue. 2 residues coordinate ATP: Tyr49 and Lys88. Glu90 contacts Mg(2+). Residues 91–94 (SHNH) and Arg113 each bind substrate. His92 serves as the catalytic Proton acceptor. Asp114 serves as a coordination point for Mg(2+). Gln237 is a substrate binding site. Asp265 lines the Mg(2+) pocket. 309–311 (ESQ) is a substrate binding site. Positions 498 and 535 each coordinate ATP. Asn536 provides a ligand contact to Mg(2+). Ser538 contacts substrate.

The protein belongs to the FGAMS family. Monomer. Part of the FGAM synthase complex composed of 1 PurL, 1 PurQ and 2 PurS subunits.

It localises to the cytoplasm. It catalyses the reaction N(2)-formyl-N(1)-(5-phospho-beta-D-ribosyl)glycinamide + L-glutamine + ATP + H2O = 2-formamido-N(1)-(5-O-phospho-beta-D-ribosyl)acetamidine + L-glutamate + ADP + phosphate + H(+). Its pathway is purine metabolism; IMP biosynthesis via de novo pathway; 5-amino-1-(5-phospho-D-ribosyl)imidazole from N(2)-formyl-N(1)-(5-phospho-D-ribosyl)glycinamide: step 1/2. Its function is as follows. Part of the phosphoribosylformylglycinamidine synthase complex involved in the purines biosynthetic pathway. Catalyzes the ATP-dependent conversion of formylglycinamide ribonucleotide (FGAR) and glutamine to yield formylglycinamidine ribonucleotide (FGAM) and glutamate. The FGAM synthase complex is composed of three subunits. PurQ produces an ammonia molecule by converting glutamine to glutamate. PurL transfers the ammonia molecule to FGAR to form FGAM in an ATP-dependent manner. PurS interacts with PurQ and PurL and is thought to assist in the transfer of the ammonia molecule from PurQ to PurL. The chain is Phosphoribosylformylglycinamidine synthase subunit PurL from Anaeromyxobacter dehalogenans (strain 2CP-1 / ATCC BAA-258).